The sequence spans 199 residues: dTTP/UTP pyrophosphatase (199 aa).

Residue aspartate 73 is the Proton acceptor of the active site.

Belongs to the Maf family. YhdE subfamily. A divalent metal cation is required as a cofactor.

It localises to the cytoplasm. It carries out the reaction dTTP + H2O = dTMP + diphosphate + H(+). The enzyme catalyses UTP + H2O = UMP + diphosphate + H(+). In terms of biological role, nucleoside triphosphate pyrophosphatase that hydrolyzes dTTP and UTP. May have a dual role in cell division arrest and in preventing the incorporation of modified nucleotides into cellular nucleic acids. The chain is dTTP/UTP pyrophosphatase from Caldicellulosiruptor saccharolyticus (strain ATCC 43494 / DSM 8903 / Tp8T 6331).